The following is a 269-amino-acid chain: Shikimate dehydrogenase (NADP(+)) (269 aa).

Residues serine 14–serine 16 and threonine 61 each bind shikimate. The active-site Proton acceptor is the lysine 65. An NADP(+)-binding site is contributed by glutamate 77. 2 residues coordinate shikimate: asparagine 86 and aspartate 102. NADP(+) contacts are provided by residues glycine 126–alanine 130, asparagine 149–lysine 154, and methionine 213. A shikimate-binding site is contributed by tyrosine 215. An NADP(+)-binding site is contributed by glycine 238.

This sequence belongs to the shikimate dehydrogenase family. In terms of assembly, homodimer.

It carries out the reaction shikimate + NADP(+) = 3-dehydroshikimate + NADPH + H(+). Its pathway is metabolic intermediate biosynthesis; chorismate biosynthesis; chorismate from D-erythrose 4-phosphate and phosphoenolpyruvate: step 4/7. Functionally, involved in the biosynthesis of the chorismate, which leads to the biosynthesis of aromatic amino acids. Catalyzes the reversible NADPH linked reduction of 3-dehydroshikimate (DHSA) to yield shikimate (SA). This is Shikimate dehydrogenase (NADP(+)) from Actinobacillus succinogenes (strain ATCC 55618 / DSM 22257 / CCUG 43843 / 130Z).